We begin with the raw amino-acid sequence, 524 residues long: Alkaline phosphatase, tissue-nonspecific isozyme (524 aa).

Positions 1 to 17 (MISPFLVLAIGTCLTNS) are cleaved as a signal peptide. Asp-60 lines the Mg(2+) pocket. Positions 60 and 110 each coordinate Zn(2+). Ser-110 (phosphoserine intermediate) is an active-site residue. At Ser-110 the chain carries Phosphoserine. Residues Cys-139 and Cys-201 are joined by a disulfide bond. Asn-140 carries N-linked (GlcNAc...) asparagine glycosylation. Residue Thr-173 participates in Mg(2+) binding. N-linked (GlcNAc...) asparagine glycosylation occurs at Asn-230. Glu-235 is a Ca(2+) binding site. N-linked (GlcNAc...) asparagine glycosylation is present at Asn-271. Ca(2+) is bound by residues Phe-290 and Glu-291. A glycan (N-linked (GlcNAc...) asparagine) is linked at Asn-303. Residue Asp-306 participates in Ca(2+) binding. Glu-332 serves as a coordination point for Mg(2+). Asp-337, His-341, Asp-378, and His-379 together coordinate Zn(2+). Asn-430 carries N-linked (GlcNAc...) asparagine glycosylation. Residue His-454 coordinates Zn(2+). The cysteines at positions 489 and 497 are disulfide-linked. The GPI-anchor amidated serine moiety is linked to residue Ser-501. Residues 502-524 (SAGSLAAGPLLLALALYPLSVLF) constitute a propeptide, removed in mature form.

The protein belongs to the alkaline phosphatase family. In terms of assembly, homodimer. Mg(2+) serves as cofactor. The cofactor is Zn(2+). It depends on Ca(2+) as a cofactor. Post-translationally, N-glycosylated.

The protein resides in the cell membrane. It localises to the extracellular vesicle membrane. Its subcellular location is the mitochondrion membrane. The protein localises to the mitochondrion intermembrane space. The enzyme catalyses a phosphate monoester + H2O = an alcohol + phosphate. It catalyses the reaction diphosphate + H2O = 2 phosphate + H(+). The catalysed reaction is pyridoxal 5'-phosphate + H2O = pyridoxal + phosphate. It carries out the reaction phosphoethanolamine + H2O = ethanolamine + phosphate. The enzyme catalyses N-phosphocreatine + H2O = creatine + phosphate. It catalyses the reaction ATP + H2O = ADP + phosphate + H(+). The catalysed reaction is ADP + H2O = AMP + phosphate + H(+). It carries out the reaction AMP + H2O = adenosine + phosphate. With respect to regulation, phosphatase activity is specifically inhibited by 5-((5-chloro-2-methoxyphenyl)sulfonamido)nicotinamide (SBI-425). In terms of biological role, alkaline phosphatase that metabolizes various phosphate compounds and plays a key role in skeletal mineralization and adaptive thermogenesis. Has broad substrate specificity and can hydrolyze a considerable variety of compounds: however, only a few substrates, such as diphosphate (inorganic pyrophosphate; PPi), pyridoxal 5'-phosphate (PLP) and N-phosphocreatine are natural substrates. Plays an essential role in skeletal and dental mineralization via its ability to hydrolyze extracellular diphosphate, a potent mineralization inhibitor, to phosphate: it thereby promotes hydroxyapatite crystal formation and increases inorganic phosphate concentration. Acts in a non-redundant manner with PHOSPHO1 in skeletal mineralization: while PHOSPHO1 mediates the initiation of hydroxyapatite crystallization in the matrix vesicles (MVs), ALPL/TNAP catalyzes the spread of hydroxyapatite crystallization in the extracellular matrix. Also promotes dephosphorylation of osteopontin (SSP1), an inhibitor of hydroxyapatite crystallization in its phosphorylated state; it is however unclear whether ALPL/TNAP mediates SSP1 dephosphorylation via a direct or indirect manner. Catalyzes dephosphorylation of PLP to pyridoxal (PL), the transportable form of vitamin B6, in order to provide a sufficient amount of PLP in the brain, an essential cofactor for enzymes catalyzing the synthesis of diverse neurotransmitters. Additionally, also able to mediate ATP degradation in a stepwise manner to adenosine, thereby regulating the availability of ligands for purinergic receptors. Also capable of dephosphorylating microbial products, such as lipopolysaccharides (LPS) as well as other phosphorylated small-molecules, such as poly-inosine:cytosine (poly I:C). Acts as a key regulator of adaptive thermogenesis as part of the futile creatine cycle: localizes to the mitochondria of thermogenic fat cells and acts by mediating hydrolysis of N-phosphocreatine to initiate a futile cycle of creatine dephosphorylation and phosphorylation. During the futile creatine cycle, creatine and N-phosphocreatine are in a futile cycle, which dissipates the high energy charge of N-phosphocreatine as heat without performing any mechanical or chemical work. The polypeptide is Alkaline phosphatase, tissue-nonspecific isozyme (Homo sapiens (Human)).